We begin with the raw amino-acid sequence, 128 residues long: Tachykinin-4 (128 aa).

Positions methionine 1–cysteine 16 are cleaved as a signal peptide. The propeptide occupies threonine 17–leucine 54. A Methionine amide modification is found at methionine 66. Residues arginine 69–valine 128 constitute a propeptide that is removed on maturation. The tract at residues glutamine 96–valine 128 is disordered.

This sequence belongs to the tachykinin family. As to expression, expressed in hematopoietic cells with highest levels in pre- and pro-B cells but not in later developmental stages. Also detected in uterus, skeletal muscle, brain, spleen, stomach, skin and lactating mammary gland and in cells of myeloid lineage including dendritic and microglial cells and macrophages. In uterus, highest expression is observed in non-pregnant diestrus mice and in day 5 pregnant mice. Compared with mice in diestrus, decreases 2.6-fold in uteri from non-pregnant mice in estrus and 10.2-fold in day 17 pregnant mice. Detected at sites of chronic inflammation such as granulomas.

The protein localises to the secreted. Its function is as follows. Tachykinins are active peptides which excite neurons, evoke behavioral responses, are potent vasodilators and secretagogues, and contract (directly or indirectly) many smooth muscles. Hemokinin induces plasma extravasation, mast cell degranulation, muscle contraction, salivary secretion and scratching behavior. Increases sperm motility. Induces potent analgesic effects and may play a role in pain modulation. Promotes survival of bone marrow B lineage cells and of cultured LPS-stimulated pre-B cells and may act as an autocrine factor required for B-cell survival and proliferation. Lowers systemic arterial pressure following intravenous injection. Induces interferon-gamma production and may play a role in the inflammatory response. Shows potent affinity and specificity for the NK-1 receptor. This Mus musculus (Mouse) protein is Tachykinin-4.